Consider the following 417-residue polypeptide: Dihydroorotase (417 aa).

The Zn(2+) site is built by His-60 and His-62. Substrate contacts are provided by residues His-62–Arg-64 and Asn-94. The Zn(2+) site is built by Lys-138, His-167, His-207, and Asp-275. Lys-138 is modified (N6-carboxylysine). Asp-275 is an active-site residue. Substrate contacts are provided by residues His-279 and Ala-289–Gly-290.

This sequence belongs to the metallo-dependent hydrolases superfamily. DHOase family. Class I DHOase subfamily. Zn(2+) serves as cofactor.

It catalyses the reaction (S)-dihydroorotate + H2O = N-carbamoyl-L-aspartate + H(+). Its pathway is pyrimidine metabolism; UMP biosynthesis via de novo pathway; (S)-dihydroorotate from bicarbonate: step 3/3. Its function is as follows. Catalyzes the reversible cyclization of carbamoyl aspartate to dihydroorotate. The polypeptide is Dihydroorotase (Pyrococcus horikoshii (strain ATCC 700860 / DSM 12428 / JCM 9974 / NBRC 100139 / OT-3)).